Consider the following 371-residue polypeptide: Protein maelstrom 1 (371 aa).

Residues Ala2 to Arg68 constitute a DNA-binding region (HMG box).

It belongs to the maelstrom family.

It is found in the cytoplasm. The protein resides in the nucleus. In terms of biological role, involved both in the piRNA and miRNA metabolic processes. As a component of the meiotic nuage, plays a central role during oogenesis by repressing transposable elements and preventing their mobilization, which is essential for the germline integrity. Repression of transposable elements is mediated via the piRNA metabolic process, which mediates the repression of transposable elements during meiosis by forming complexes composed of piRNAs and Piwi proteins and governs the repression of transposons. As a nuclear component, it is required for proper differentiation in the germline stem cell (GSC) lineage by repressing microRNA-7 (miR-7), thereby acting as an indirect regulator of bag-of-marbles (Bam). Acts by binding to the promoter of miR-7 gene and repressing its expression; miR-7 repression alleviates the Bam repression by miR-7, thereby allowing differentiation in the germline stem cell (GSC) lineage. The protein is Protein maelstrom 1 (mael1) of Drosophila pseudoobscura pseudoobscura (Fruit fly).